The chain runs to 1480 residues: Cystic fibrosis transmembrane conductance regulator (1480 aa).

Topologically, residues 1-77 (MQRSPLEKAS…KLINALRRCF (77 aa)) are cytoplasmic. The chain crosses the membrane as a helical span at residues 78–98 (FWRFMFYGIFLYLGEVTKAVQ). Residues 81 to 365 (FMFYGIFLYL…WAVQTWYDSL (285 aa)) form the ABC transmembrane type-1 1 domain. The Extracellular segment spans residues 99–122 (PLLLGRIIASYDPDNKEERSIAIY). The chain crosses the membrane as a helical span at residues 123 to 146 (LGIGLCLLFIVRTLLLHPAIFGLH). Residues 147–195 (HIGMQMRIAMFSLIYKKTLKLSSRVLDKISIGQLVSLLSNNLNKFDEGL) are Cytoplasmic-facing. The helical transmembrane segment at 196–216 (ALAHFVWIAPLQVALLMGLIW) threads the bilayer. The Extracellular segment spans residues 217-222 (ELLQAS). Residues 223 to 243 (AFCGLGFLIVLALFQAGLGRM) traverse the membrane as a helical segment. Over 244 to 298 (MMKYRDQRAGKISERLVITSEMIENIQSVKAYCWEEAMEKMIENLRQTELKLTRK) the chain is Cytoplasmic. Residues 299 to 319 (AAYVRYFNSSAFFFSGFFVVF) form a helical membrane-spanning segment. Residues 320 to 339 (LSVLPYALIKGIILRKIFTT) are Extracellular-facing. A helical membrane pass occupies residues 340–358 (ISFCIVLRMAVTRQFPWAV). Residues 359–858 (QTWYDSLGAI…YLRYITVHKS (500 aa)) are Cytoplasmic-facing. ATP is bound by residues Trp401, Ser434, 458-465 (GSTGAGKT), and Gln493. In terms of domain architecture, ABC transporter 1 spans 423–646 (NGDDSLFFSN…QPDFSSKLMG (224 aa)). A lipid anchor (S-palmitoyl cysteine) is attached at Cys524. The residue at position 549 (Ser549) is a Phosphoserine. A disordered R region region spans residues 654-831 (SAERRNSILT…EEINEEDLKE (178 aa)). Phosphoserine; by PKA is present on residues Ser660 and Ser670. Residue Ser686 is modified to Phosphoserine; by PKC. Lys688 is covalently cross-linked (Glycyl lysine isopeptide (Lys-Gly) (interchain with G-Cter in ubiquitin)). Phosphoserine; by PKA is present on residues Ser700 and Ser712. Thr717 bears the Phosphothreonine mark. Residues Ser737, Ser753, and Ser768 each carry the phosphoserine; by PKA modification. Ser790 is modified (phosphoserine; by PKC). 2 positions are modified to phosphoserine; by PKA: Ser795 and Ser813. The chain crosses the membrane as a helical span at residues 859-879 (LIFVLIWCLVIFLAEVAASLV). Residues 859-1155 (LIFVLIWCLV…AVNSSIDVDS (297 aa)) enclose the ABC transmembrane type-1 2 domain. Residues 880-918 (VLWLLGNTPLQDKGNSTHSRNNSYAVIITSTSSYYVFYI) are Extracellular-facing. 2 N-linked (GlcNAc...) asparagine glycosylation sites follow: Asn894 and Asn900. A discontinuously helical membrane pass occupies residues 919 to 939 (YVGVADTLLAMGFFRGLPLVH). The Cytoplasmic portion of the chain corresponds to 940 to 990 (TLITVSKILHHKMLHSVLQAPMSTLNTLKAGGILNRFSKDIAILDDLLPLT). Residues 991 to 1011 (IFDFIQLLLIVIGAIAVVAVL) traverse the membrane as a helical segment. The Extracellular portion of the chain corresponds to 1012 to 1013 (QP). Residues 1014–1034 (YIFVATVPVIVAFIMLRAYFL) traverse the membrane as a helical segment. Topologically, residues 1035–1095 (QTSQQLKQLE…TANWFLYLST (61 aa)) are cytoplasmic. Residues 1096–1116 (LRWFQMRIEMIFVIFFIAVTF) form a helical membrane-spanning segment. Residues 1117 to 1130 (ISILTTGEGEGRVG) lie on the Extracellular side of the membrane. The helical transmembrane segment at 1131 to 1151 (IILTLAMNIMSTLQWAVNSSI) threads the bilayer. The Cytoplasmic segment spans residues 1152-1480 (DVDSLMRSVS…TEEEVQDTRL (329 aa)). Residues 1210-1443 (MTVKDLTAKY…RSLFRQAISP (234 aa)) enclose the ABC transporter 2 domain. Residues Tyr1219 and 1244-1251 (GRTGSGKS) each bind ATP. Positions 1386 to 1480 (RTLKQAFADC…TEEEVQDTRL (95 aa)) are interaction with GORASP2. Cys1395 is lipidated: S-palmitoyl cysteine. Phosphoserine is present on residues Ser1444 and Ser1456. The segment at 1452-1480 (HRNSSKCKSKPQIAALKEETEEEVQDTRL) is disordered. Positions 1470–1480 (ETEEEVQDTRL) are enriched in acidic residues. Residues 1478–1480 (TRL) carry the PDZ-binding motif.

Belongs to the ABC transporter superfamily. ABCC family. CFTR transporter (TC 3.A.1.202) subfamily. Monomer; does not require oligomerization for channel activity. May form oligomers in the membrane. Interacts with SLC26A3, SLC26A6 and SHANK2. Interacts with NHERF1 and MYO6. Interacts (via C-terminus) with GOPC (via PDZ domain); this promotes CFTR internalization and thereby decreases channel activity. Interacts with SLC4A7 through NHERF1. Found in a complex with MYO5B and RAB11A. Interacts with ANO1. Interacts with SLC26A8. Interacts with AHCYL1; the interaction increases CFTR activity. Interacts with CSE1L. The core-glycosylated form interacts with GORASP2 (via PDZ GRASP-type 1 domain) in respone to ER stress. Interacts with MARCHF2; the interaction leads to CFTR ubiqtuitination and degradation. Interacts with ADGRG2. In terms of processing, N-glycosylated. Post-translationally, phosphorylated; cAMP treatment promotes phosphorylation and activates the channel. Dephosphorylation decreases the ATPase activity (in vitro). Phosphorylation at PKA sites activates the channel. Phosphorylation at PKC sites enhances the response to phosphorylation by PKA. Phosphorylated by AMPK; this inhibits channel activity. Ubiquitinated, leading to its degradation in the lysosome. Deubiquitination by USP10 in early endosomes enhances its endocytic recycling to the cell membrane. Ubiquitinated by RNF185 during ER stress. Ubiquitinated by MARCHF2. Expressed in the respiratory airway, including bronchial epithelium, and in the female reproductive tract, including oviduct (at protein level). Detected in pancreatic intercalated ducts in the exocrine tissue, on epithelial cells in intralobular striated ducts in sublingual salivary glands, on apical membranes of crypt cells throughout the small and large intestine, and on the reabsorptive duct in eccrine sweat glands. Detected on the equatorial segment of the sperm head (at protein level). Detected in nasal and bronchial superficial epithelium. Expressed by the central cells on the sebaceous glands, dermal adipocytes and, at lower levels, by epithelial cells.

The protein localises to the apical cell membrane. The protein resides in the early endosome membrane. It localises to the cell membrane. Its subcellular location is the recycling endosome membrane. It is found in the endoplasmic reticulum membrane. The protein localises to the nucleus. The catalysed reaction is ATP + H2O + closed Cl(-) channel = ADP + phosphate + open Cl(-) channel.. It carries out the reaction chloride(in) = chloride(out). The enzyme catalyses hydrogencarbonate(in) = hydrogencarbonate(out). It catalyses the reaction ATP + H2O = ADP + phosphate + H(+). Its function is as follows. Epithelial ion channel that plays an important role in the regulation of epithelial ion and water transport and fluid homeostasis. Mediates the transport of chloride ions across the cell membrane. Possesses an intrinsic ATPase activity and utilizes ATP to gate its channel; the passive flow of anions through the channel is gated by cycles of ATP binding and hydrolysis by the ATP-binding domains. The ion channel is also permeable to HCO(3)(-); selectivity depends on the extracellular chloride concentration. In vitro, mediates ATP-dependent glutathione flux. Exerts its function also by modulating the activity of other ion channels and transporters. Plays an important role in airway fluid homeostasis. Contributes to the regulation of the pH and the ion content of the airway surface fluid layer and thereby plays an important role in defense against pathogens. Modulates the activity of the epithelial sodium channel (ENaC) complex, in part by regulating the cell surface expression of the ENaC complex. Inhibits the activity of the ENaC channel containing subunits SCNN1A, SCNN1B and SCNN1G. Inhibits the activity of the ENaC channel containing subunits SCNN1D, SCNN1B and SCNN1G, but not of the ENaC channel containing subunits SCNN1A, SCNN1B and SCNN1G. May regulate bicarbonate secretion and salvage in epithelial cells by regulating the transporter SLC4A7. Can inhibit the chloride channel activity of ANO1. Plays a role in the chloride and bicarbonate homeostasis during sperm epididymal maturation and capacitation. In Homo sapiens (Human), this protein is Cystic fibrosis transmembrane conductance regulator.